The chain runs to 180 residues: Nucleoside triphosphate/diphosphate phosphatase (180 aa).

Arg-26 serves as the catalytic Proton donor. Mg(2+) contacts are provided by Asn-90, Asp-106, Asp-108, Asp-110, Asp-123, and Glu-126.

This sequence belongs to the Ntdp family. It depends on Mg(2+) as a cofactor.

The catalysed reaction is a ribonucleoside 5'-triphosphate + H2O = a ribonucleoside 5'-diphosphate + phosphate + H(+). The enzyme catalyses a ribonucleoside 5'-diphosphate + H2O = a ribonucleoside 5'-phosphate + phosphate + H(+). Functionally, has nucleoside phosphatase activity towards nucleoside triphosphates and nucleoside diphosphates. The protein is Nucleoside triphosphate/diphosphate phosphatase of Staphylococcus aureus (strain MRSA252).